The chain runs to 338 residues: Probable cytosolic iron-sulfur protein assembly protein Ciao1 (338 aa).

WD repeat units lie at residues 12–51, 58–97, 102–141, 147–186, 193–232, 234–252, 253–291, and 302–338; these read GHRG…RWVP, GHTR…FECN, GHEN…EYEC, THSQ…SDWS, SHDS…NEFG, ACPD…LSGF, HSRA…PANE, and AHSQ…EDDE.

The protein belongs to the WD repeat CIA1 family.

Essential component of the cytosolic iron-sulfur (Fe/S) protein assembly machinery. Required for the maturation of extramitochondrial Fe/S proteins. This is Probable cytosolic iron-sulfur protein assembly protein Ciao1 from Culex quinquefasciatus (Southern house mosquito).